The primary structure comprises 222 residues: Ribosomal RNA small subunit methyltransferase G (222 aa).

Residues Gly84, Phe89, 141–142, and Arg154 contribute to the S-adenosyl-L-methionine site; that span reads VE.

This sequence belongs to the methyltransferase superfamily. RNA methyltransferase RsmG family.

It is found in the cytoplasm. The enzyme catalyses guanosine(527) in 16S rRNA + S-adenosyl-L-methionine = N(7)-methylguanosine(527) in 16S rRNA + S-adenosyl-L-homocysteine. In terms of biological role, specifically methylates the N7 position of guanine in position 527 of 16S rRNA. This chain is Ribosomal RNA small subunit methyltransferase G, found in Bradyrhizobium sp. (strain BTAi1 / ATCC BAA-1182).